The primary structure comprises 245 residues: 1-(5-phosphoribosyl)-5-[(5-phosphoribosylamino)methylideneamino] imidazole-4-carboxamide isomerase (245 aa).

Aspartate 7 serves as the catalytic Proton acceptor. The Proton donor role is filled by aspartate 129.

The protein belongs to the HisA/HisF family.

It localises to the cytoplasm. The enzyme catalyses 1-(5-phospho-beta-D-ribosyl)-5-[(5-phospho-beta-D-ribosylamino)methylideneamino]imidazole-4-carboxamide = 5-[(5-phospho-1-deoxy-D-ribulos-1-ylimino)methylamino]-1-(5-phospho-beta-D-ribosyl)imidazole-4-carboxamide. It functions in the pathway amino-acid biosynthesis; L-histidine biosynthesis; L-histidine from 5-phospho-alpha-D-ribose 1-diphosphate: step 4/9. This Yersinia pestis bv. Antiqua (strain Antiqua) protein is 1-(5-phosphoribosyl)-5-[(5-phosphoribosylamino)methylideneamino] imidazole-4-carboxamide isomerase.